Reading from the N-terminus, the 284-residue chain is L-ribulose-5-phosphate 3-epimerase UlaE (284 aa).

Belongs to the L-ribulose-5-phosphate 3-epimerase family.

It carries out the reaction L-ribulose 5-phosphate = L-xylulose 5-phosphate. It participates in cofactor degradation; L-ascorbate degradation; D-xylulose 5-phosphate from L-ascorbate: step 3/4. In terms of biological role, catalyzes the isomerization of L-xylulose-5-phosphate to L-ribulose-5-phosphate. Is involved in the anaerobic L-ascorbate utilization. The sequence is that of L-ribulose-5-phosphate 3-epimerase UlaE from Shigella flexneri serotype 5b (strain 8401).